The chain runs to 1204 residues: E3 ubiquitin-protein ligase DZIP3 (1204 aa).

2 disordered regions span residues 1–22 (MDSLAEEFFVSGNPDVEEQTKE) and 640–681 (SIPS…EQVS). Basic and acidic residues predominate over residues 649 to 658 (SVKDLQEVKS). Residues 659-668 (KTKKKKRTKS) show a composition bias toward basic residues. 2 coiled-coil regions span residues 746–861 (KETE…TSRA) and 906–941 (QLKAAVDSWNAIVADVRNKIAFLRTQYNEQINKVKQ). Residues 1088-1098 (PKKSESEEKSA) show a composition bias toward basic and acidic residues. The segment at 1088–1141 (PKKSESEEKSAQDGNNASPSHTASQPNAPQDPKSAQGSATWEGDKDMDNEEEEE) is disordered. The span at 1099 to 1126 (QDGNNASPSHTASQPNAPQDPKSAQGSA) shows a compositional bias: polar residues. Positions 1132–1141 (KDMDNEEEEE) are enriched in acidic residues. An RING-type; atypical zinc finger spans residues 1144-1184 (CVICHENLSPENLSVLPCAHKFHSQCIRPWLMQQGTCPTCR).

As to quaternary structure, probably interacts with DAZL.

It localises to the cytoplasm. It catalyses the reaction S-ubiquitinyl-[E2 ubiquitin-conjugating enzyme]-L-cysteine + [acceptor protein]-L-lysine = [E2 ubiquitin-conjugating enzyme]-L-cysteine + N(6)-ubiquitinyl-[acceptor protein]-L-lysine.. The protein operates within protein modification; protein ubiquitination. Functionally, E3 Ubiquitin ligase proteins mediate ubiquitination and subsequent proteasomal degradation of target proteins. E3 ubiquitin ligases accept ubiquitin from an E2 ubiquitin-conjugating enzyme in the form of a thioester and then directly transfers the ubiquitin to targeted substrates. Able to specifically bind RNA. The protein is E3 ubiquitin-protein ligase DZIP3 (Dzip3) of Mus musculus (Mouse).